The following is a 146-amino-acid chain: Wheatwin-1 (146 aa).

Residues 1 to 21 form the signal peptide; the sequence is MAARPMLVVALLCAAAAAATA. Q22 carries the post-translational modification Pyrrolidone carboxylic acid. Residues 22-146 enclose the Barwin domain; sequence QQATNVRATY…VNYQFVDCRD (125 aa). Intrachain disulfides connect C52–C84, C73–C107, and C87–C144.

As to quaternary structure, monomer.

Its activity is regulated as follows. Inhibited by 5'-ADP. Its function is as follows. Shows antifungal activity towards B.cinerea and towards the wheat-specific pathogenic fungi F.culmorum and F.graminearum (groups 1 and 2). Has ribonuclease activity. This Triticum aestivum (Wheat) protein is Wheatwin-1 (PR4A).